Here is a 99-residue protein sequence, read N- to C-terminus: Transcription factor 1 (99 aa).

May be involved in preference for HM-URA DNA stretches follow at residues 52–77 (PVAR…SVGV) and 90–99 (EGLKYEDFAK). 2 DNA-binding regions span residues F61 and 93–94 (KY).

This sequence belongs to the bacterial histone-like protein family. In terms of assembly, homodimer.

In terms of biological role, selectively binds to and inhibits the transcription of hydroxymethyluracil-(hmUra)-containing DNA, such as SP01 DNA, by RNA polymerase in vitro. The protein is Transcription factor 1 (TF1) of Bacillus phage SP01 (Bacteriophage SP01).